The primary structure comprises 534 residues: Bifunctional pantoate ligase/cytidylate kinase (534 aa).

The pantoate--beta-alanine ligase stretch occupies residues 1–302 (MRLLTTVAAL…LGSTRLIDNT (302 aa)). Residue 48 to 55 (MGSLHQGH) participates in ATP binding. His-55 functions as the Proton donor in the catalytic mechanism. Gln-79 contacts (R)-pantoate. Gln-79 is a beta-alanine binding site. Position 172–175 (172–175 (GQKD)) interacts with ATP. Gln-178 serves as a coordination point for (R)-pantoate. Residues Val-201 and 209-212 (CSSR) contribute to the ATP site. The segment at 303–534 (ILRDRQPIIA…DYYQQRLSQW (232 aa)) is cytidylate kinase.

It in the N-terminal section; belongs to the pantothenate synthetase family. This sequence in the C-terminal section; belongs to the cytidylate kinase family. Type 1 subfamily.

The protein localises to the cytoplasm. The enzyme catalyses (R)-pantoate + beta-alanine + ATP = (R)-pantothenate + AMP + diphosphate + H(+). It catalyses the reaction CMP + ATP = CDP + ADP. It carries out the reaction dCMP + ATP = dCDP + ADP. The protein operates within cofactor biosynthesis; (R)-pantothenate biosynthesis; (R)-pantothenate from (R)-pantoate and beta-alanine: step 1/1. In terms of biological role, catalyzes the condensation of pantoate with beta-alanine in an ATP-dependent reaction via a pantoyl-adenylate intermediate. Its function is as follows. Catalyzes the transfer of a phosphate group from ATP to either CMP or dCMP to form CDP or dCDP and ADP, respectively. This chain is Bifunctional pantoate ligase/cytidylate kinase, found in Trichormus variabilis (strain ATCC 29413 / PCC 7937) (Anabaena variabilis).